A 201-amino-acid chain; its full sequence is Putative manganese efflux pump MntP (201 aa).

5 consecutive transmembrane segments (helical) span residues 6 to 26, 39 to 59, 105 to 125, 127 to 147, and 169 to 189; these read CLAV…ATGI, LAFH…TLGL, LTLI…GLSL, VLGI…LLFT, and LAGG…HGVF.

The protein belongs to the MntP (TC 9.B.29) family.

Its subcellular location is the cell inner membrane. Functionally, probably functions as a manganese efflux pump. This is Putative manganese efflux pump MntP from Nitratidesulfovibrio vulgaris (strain ATCC 29579 / DSM 644 / CCUG 34227 / NCIMB 8303 / VKM B-1760 / Hildenborough) (Desulfovibrio vulgaris).